The primary structure comprises 1405 residues: MKDLLKFLKQQSKTEEFNGIKIGLASPDLIRSWSFGEVKKPETINYRTFKPEREGLFCARIFGPVKDYECLCGKYKRLKHRGVICEKCGVEVTQTKVRRERMGHIDLASPVAHIWFLKSLPSRIGLMLDMTLRDIERVLYFESFVVIEPGMTSLERGQMLTEENYLDALEEYGDEFEAKMGAEAVLELLRAIELEKEIEMMREELPSINSETRRKKITKRLKLVEAFFQSGNKPEWMILKVLPVLPPDLRPLVPLDGGRFATSDLNDLYRRVINRNNRLKRLLDLAAPDIIVRNEKRMLQESVDALLDNGRRGRAITGSNKRPLKSLADMIKGKQGRFRQNLLGKRVDYSGRSVITVGPTLRLHQCGLPKKMALELFKPFIYGKLEGRGLATTIKAAKKMVEREVPEVWDVLDDVIREHPVMLNRAPTLHRLGIQAFEPVLIEGKAIQLHPLVCAAYNADFDGDQMAVHVPLTLEAQLEARSLMMSTNNILSPANGEPVITPSQDVVLGLYYTSRECVNGKGEGMVFESVDEVEKAYRTKFAAIHARVKVRITETNIDENGERSESRRIVDTTVGRALLSRILPKGLSYDLVNQNMGKKQISKLLNTCYRQLGLKDTVIFADQLMYAGFHYATVSGASVGINDMVIPDEKYTLVADAEAEVLEIQEQFQSGLVTAGERYNKVIDIWASANEKVSKAMMENLSSETVINREGVPEKQESFNSIYMMADSGARGSAAQIRQLAGMRGLMAKPDGSIIETPIVANFREGLNVSQYFISTHGARKGLADTALKTANSGYLTRRLVDVAQDLVVIEDDCGTFEGLTMKPLIEGGDVVEPLRERVLGRVVAIDVMYPGTEKVLAPRNTLLDEAWCDLLEEHSVDEMIVRSVISCDTDFGVCKACYGRDLARGHIINQGEAIGVVAAQSIGEPGTQLTMRTFHIGGAASRASAENNVQVKNAGTVKLHNAKHVTNSEGKLVIVSRSSEIAIIDELGREKERYKVPYGTILEKLEEASVAAGEIIANWDPHTHPIISEVAGSIKFVDMLDGVTMTRQTDELTGLSSIVVMEVGQRPTAGKEMRPAIRLVGADGNDLMIPGTEVPAQYFLPANAIVNQDDNAPINVGDALARIPQESSKTRDITGGLPRVADLFEARKPKEPAILAEYSGTISFGKETKGKRRLVITPADGSEAYEEMIPKWRNLNVFEGEKVERGEVIADGAEAAHDILRLRGIHKVANYIVNEVQDVYRLQGVKINDKHIEVIIRQMLRKCEITNAGDSQFLAGEQAEVSRVKIANRELEAQGKQPATFERELLGITKASLATESFISAASFQETTRVLTEAAVGGKSDKLRGLKENVIVGRLIPAGTGYSYHQKRNAAAAAGTTTEAAPAISASEAEQNLADLLNLAGSSD.

Zn(2+)-binding residues include C70, C72, C85, and C88. Mg(2+)-binding residues include D460, D462, and D464. Residues C814, C888, C895, and C898 each coordinate Zn(2+).

The protein belongs to the RNA polymerase beta' chain family. As to quaternary structure, the RNAP catalytic core consists of 2 alpha, 1 beta, 1 beta' and 1 omega subunit. When a sigma factor is associated with the core the holoenzyme is formed, which can initiate transcription. Mg(2+) serves as cofactor. Requires Zn(2+) as cofactor.

The enzyme catalyses RNA(n) + a ribonucleoside 5'-triphosphate = RNA(n+1) + diphosphate. DNA-dependent RNA polymerase catalyzes the transcription of DNA into RNA using the four ribonucleoside triphosphates as substrates. This is DNA-directed RNA polymerase subunit beta' from Shewanella sediminis (strain HAW-EB3).